The chain runs to 687 residues: C-mannosyltransferase dpy-19 (687 aa).

A run of 11 helical transmembrane segments spans residues 24–44, 170–190, 191–211, 223–243, 253–273, 276–296, 303–323, 324–344, 347–367, 415–435, and 454–474; these read GISGNLWLATVVLIGLFVGFL, ITGVFVVAGTVATSLFYLGVL, VSDSIFGGILSVLCFAFNHGE, ESFAFPFIIGHIAILTYIIKY, LLISAAVPALLFWQFTQFAFF, ICSIFAAFSMDLVPLDTAKTI, AFFISFVMLFGNEMMIAALYF, PSIWALATVIYISPMLAGIRL, LYLLILALIFGSITLGLKVGF, LSSTLLIPLALLSIGAFSWDF, and GEVIYNLVQLICSTTMAVLIM.

It belongs to the dpy-19 family.

It localises to the endoplasmic reticulum membrane. C-mannosyltransferase that mediates C-mannosylation of tryptophan residues on target proteins such as unc-5 and mig-21. Mediates the attachment of alpha-mannose in C-C linkage to the C2 of the indole ring of tryptophan. C-mannosylation takes place in the endoplasmic reticulum and frequently found in thrombospondin (TSP) type-1 repeats and in the WSXWS motif of type I cytokine receptors. Required to orient neuroblasts QL and QR correctly on the anterior/posterior (A/P) axis: QL and QR are born in the same A/P position, but polarize and migrate left/right asymmetrically, QL migrates toward the posterior and QR migrates toward the anterior. Required with unc-40 to express mab-5 correctly in the Q cell descendants. The sequence is that of C-mannosyltransferase dpy-19 from Caenorhabditis briggsae.